The following is a 304-amino-acid chain: Glycine--tRNA ligase alpha subunit (304 aa).

It belongs to the class-II aminoacyl-tRNA synthetase family. In terms of assembly, tetramer of two alpha and two beta subunits.

Its subcellular location is the cytoplasm. It catalyses the reaction tRNA(Gly) + glycine + ATP = glycyl-tRNA(Gly) + AMP + diphosphate. This is Glycine--tRNA ligase alpha subunit from Actinobacillus pleuropneumoniae serotype 3 (strain JL03).